A 306-amino-acid polypeptide reads, in one-letter code: Pyridoxal 5'-phosphate synthase subunit PdxS (306 aa).

Asp-36 is a binding site for D-ribose 5-phosphate. The Schiff-base intermediate with D-ribose 5-phosphate role is filled by Lys-93. D-ribose 5-phosphate is bound at residue Gly-165. Arg-177 is a binding site for D-glyceraldehyde 3-phosphate. D-ribose 5-phosphate-binding positions include Gly-226 and 247 to 248 (GS).

Belongs to the PdxS/SNZ family. In terms of assembly, in the presence of PdxT, forms a dodecamer of heterodimers.

It carries out the reaction aldehydo-D-ribose 5-phosphate + D-glyceraldehyde 3-phosphate + L-glutamine = pyridoxal 5'-phosphate + L-glutamate + phosphate + 3 H2O + H(+). It participates in cofactor biosynthesis; pyridoxal 5'-phosphate biosynthesis. Functionally, catalyzes the formation of pyridoxal 5'-phosphate from ribose 5-phosphate (RBP), glyceraldehyde 3-phosphate (G3P) and ammonia. The ammonia is provided by the PdxT subunit. Can also use ribulose 5-phosphate and dihydroxyacetone phosphate as substrates, resulting from enzyme-catalyzed isomerization of RBP and G3P, respectively. The chain is Pyridoxal 5'-phosphate synthase subunit PdxS from Salinispora tropica (strain ATCC BAA-916 / DSM 44818 / JCM 13857 / NBRC 105044 / CNB-440).